The sequence spans 314 residues: Serine/threonine-protein phosphatase PP2A-4 catalytic subunit (314 aa).

Mn(2+)-binding residues include aspartate 62, histidine 64, aspartate 90, and asparagine 122. The active-site Proton donor is the histidine 123. Histidine 172 and histidine 246 together coordinate Mn(2+).

This sequence belongs to the PPP phosphatase family. PP-2A subfamily. Mn(2+) serves as cofactor.

The protein resides in the cytoplasm. The enzyme catalyses O-phospho-L-seryl-[protein] + H2O = L-seryl-[protein] + phosphate. It catalyses the reaction O-phospho-L-threonyl-[protein] + H2O = L-threonyl-[protein] + phosphate. In Oryza sativa subsp. japonica (Rice), this protein is Serine/threonine-protein phosphatase PP2A-4 catalytic subunit (PP2A4).